The chain runs to 727 residues: MTQEVLERSIQVGGRTMTFQTGKIGKQAGGAIFCRYGDTVVSAFATGSAQPREGIDFFPLTVEFEERLYAAGKIPGGFIKREGRPSEKAILSARLIDRPIRPLFPEGYRNDVQVVAQVMSVDQDCASDITGINAASAALTISNVPFEGPVAAVTVGLIGDEFIINPTVEQSEKSVMHLTVAGTKDAVMMVEAGAQEVPEAQMLEAIMFGHREIQRIAEFIENYRLEALERNLAKPKQEVVMKQMPEEIVQAVKAFAYDKMDQAVRTEEKKAREEAIRQVKEEALAHFAEQYPEDSKTIDKILEDFVHKIVRRLITVEHIRPDGRALDEIRPISVEVGILPRTHGTGLFTRGQTQVLTVATLGAVGDEQILDGLGLEESKRYMHHYNFPPYSVGETRPMRGPGRREIGHGALAERALLPVIPDENDFPYTIRLVSEVLESNGSSSMASVCGSTLSLMDAGVPVKSPVAGIAMGLISEENHIAILSDIQGMEDHDGDMDFKVAGTSQGVTALQMDIKIKGVSREILERALTQAKEGRLFILDKMLSVIEKPRPELSPFAPRIITASIHPDKIREVIGPGGKTIKKIIDETGVKIDIEDDGRVFISAVDGEAGENALKIIQALTQEVEVGRIYNGRVTRIMDFGAFVEVIPGVLGLSGKEGLVHISQLAHGRVEKVEDVVKLGDDILVKATGIDKQGRLNLSRKEALPNPNPSSNPNPNGITANRNPRNS.

Positions 491 and 497 each coordinate Mg(2+). Residues 558 to 617 enclose the KH domain; sequence PRIITASIHPDKIREVIGPGGKTIKKIIDETGVKIDIEDDGRVFISAVDGEAGENALKII. The S1 motif domain maps to 627-701; the sequence is GRIYNGRVTR…KQGRLNLSRK (75 aa). The interval 698-727 is disordered; sequence LSRKEALPNPNPSSNPNPNGITANRNPRNS. Polar residues predominate over residues 717 to 727; it reads GITANRNPRNS.

It belongs to the polyribonucleotide nucleotidyltransferase family. Mg(2+) serves as cofactor.

The protein localises to the cytoplasm. It catalyses the reaction RNA(n+1) + phosphate = RNA(n) + a ribonucleoside 5'-diphosphate. In terms of biological role, involved in mRNA degradation. Catalyzes the phosphorolysis of single-stranded polyribonucleotides processively in the 3'- to 5'-direction. The chain is Polyribonucleotide nucleotidyltransferase from Desulfitobacterium hafniense (strain Y51).